The primary structure comprises 314 residues: Peroxisome biogenesis factor 10 (314 aa).

Over Met-1–Glu-7 the chain is Peroxisomal matrix. The helical transmembrane segment at Ile-8–Leu-37 threads the bilayer. A topological domain (cytoplasmic) is located at residue Gly-38. Residues Gln-39–Ser-60 form a helical membrane-spanning segment. Residues Thr-61–Pro-90 are Peroxisomal matrix-facing. Residues Ser-91–Ile-110 form a helical membrane-spanning segment. Residues Gln-111–Asp-142 lie on the Cytoplasmic side of the membrane. Residues Val-143 to Thr-166 form a helical membrane-spanning segment. At Gly-167 to Arg-197 the chain is on the peroxisomal matrix side. The helical transmembrane segment at Phe-198 to Phe-218 threads the bilayer. At Leu-219–Leu-314 the chain is on the cytoplasmic side. Residues Cys-255, Cys-258, Cys-269, His-271, Cys-274, Cys-277, Cys-296, and Cys-299 each contribute to the Zn(2+) site. The segment at Cys-255–Arg-300 adopts an RING-type zinc-finger fold.

It belongs to the pex2/pex10/pex12 family. As to quaternary structure, component of the PEX2-PEX10-PEX12 retrotranslocation channel.

The protein localises to the peroxisome membrane. The enzyme catalyses S-ubiquitinyl-[E2 ubiquitin-conjugating enzyme]-L-cysteine + [acceptor protein]-L-lysine = [E2 ubiquitin-conjugating enzyme]-L-cysteine + N(6)-ubiquitinyl-[acceptor protein]-L-lysine.. It participates in protein modification; protein ubiquitination. The E3 ubiquitin-protein ligase activity is stimulated by PEX12/prx-12. Its function is as follows. E3 ubiquitin-protein ligase component of a retrotranslocation channel required for peroxisome organization by mediating export of the PEX5/prx-5 receptor from peroxisomes to the cytosol, thereby promoting PEX5/prx-5 recycling. The retrotranslocation channel is composed of PEX2/prx-2, PEX10/prx-10 and PEX12/prx-12; each subunit contributing transmembrane segments that coassemble into an open channel that specifically allows the passage of PEX5/prx-5 through the peroxisomal membrane. PEX10/prx-10 also regulates PEX5 recycling by acting as a E3 ubiquitin-protein ligase. When PEX5/prx-5 recycling is compromised, PEX10/prx-10 catalyzes polyubiquitination of PEX5/prx-5 during its passage through the retrotranslocation channel, leading to its degradation. The chain is Peroxisome biogenesis factor 10 from Caenorhabditis elegans.